The primary structure comprises 216 residues: Probable transaldolase (216 aa).

Catalysis depends on lysine 83, which acts as the Schiff-base intermediate with substrate.

Belongs to the transaldolase family. Type 3B subfamily.

It localises to the cytoplasm. The enzyme catalyses D-sedoheptulose 7-phosphate + D-glyceraldehyde 3-phosphate = D-erythrose 4-phosphate + beta-D-fructose 6-phosphate. The protein operates within carbohydrate degradation; pentose phosphate pathway; D-glyceraldehyde 3-phosphate and beta-D-fructose 6-phosphate from D-ribose 5-phosphate and D-xylulose 5-phosphate (non-oxidative stage): step 2/3. Functionally, transaldolase is important for the balance of metabolites in the pentose-phosphate pathway. In Clostridioides difficile (strain 630) (Peptoclostridium difficile), this protein is Probable transaldolase.